Here is a 317-residue protein sequence, read N- to C-terminus: MSLYRSVVWFAKGLREYTKSGYESACKDFVPHDLEVQIPGRVFLVTGGNSGIGKATALEIAKRGGTVHLVCRDQAPAEDARGEIIRESGNQNIFLHIVDLSDPKQIWKFVENFKQEHKLHVLINNAGCMVNKRELTEDGLEKNFAANTLGVYILTTGLIPVLEKEHDPRVITVSSGGMLVQKLNTNDLQSERTPFDGTMVYAQNKRQQVVLTERWAQGHPAIHFSSMHPGWADTPGVRQAMPGFHARFGDRLRSEAQGADTMLWLALSSAAAAQPSGRFFQDRKPVSTHLPLATASSSPAEEEKLIEILEQLAQTFK.

Residues S50 and I52 each contribute to the NAD(+) site. S175 serves as a coordination point for substrate. Positions 201, 205, and 234 each coordinate NAD(+). Y201 (proton acceptor) is an active-site residue.

This sequence belongs to the short-chain dehydrogenases/reductases (SDR) family.

Putative oxidoreductase. This chain is Dehydrogenase/reductase SDR family member 12, found in Homo sapiens (Human).